We begin with the raw amino-acid sequence, 200 residues long: MKRKNNKFIEISIAFILGVALGIYGQNPDYFTNLINQKSLASSAPKIKHYNISELLRSKVSTCFTPPAGCTKFIANQIDRAEESIYMQAYGMSDALITTALINAQMRGVKVRILLDRSNLKQKFSKLHELQRAKIDVGIDKVPGIAHNKVIIIDRKKVITGSFNFTAAADKRNAENVIIIEDRELAESYLQNWLNRKASN.

The N-terminal stretch at 1 to 25 is a signal peptide; it reads MKRKNNKFIEISIAFILGVALGIYG. The PLD phosphodiesterase domain occupies 142-169; sequence VPGIAHNKVIIIDRKKVITGSFNFTAAA. Residues His147, Lys149, and Asp154 contribute to the active site.

Belongs to the phospholipase D family. As to quaternary structure, homodimer.

It localises to the secreted. The enzyme catalyses a 1,2-diacyl-sn-glycero-3-phosphocholine + H2O = a 1,2-diacyl-sn-glycero-3-phosphate + choline + H(+). Could be a virulence factor. The chain is Phospholipase D (pld) from Rickettsia felis (strain ATCC VR-1525 / URRWXCal2) (Rickettsia azadi).